The sequence spans 468 residues: Lysosomal dipeptide transporter MFSD1 (468 aa).

Positions 1 to 25 (MEDEEEEARALLPGGSDEAGRETRA) are disordered. The Dileucine internalization motif signature appears at 11–12 (LL). The next 12 helical transmembrane spans lie at 42-62 (LAHR…SYFC), 86-106 (LLYA…GFLI), 116-136 (TIIF…GGIF), 138-158 (AFWL…SLAV), 173-194 (LNLV…NMNL), 218-238 (LMIG…LAYL), 270-290 (WLIF…IGLV), 307-327 (AINS…GLLV), 334-354 (IIWV…LAFT), 364-384 (LLGL…AFVV), 395-415 (FMQS…GMIL), and 421-441 (LFLE…VVLL).

Belongs to the major facilitator superfamily. Homodimer. Interacts with lysosomal protein GLMP (via lumenal domain); the interaction starts while both proteins are still in the endoplasmic reticulum and is required for stabilization of MFSD1 in lysosomes but has no direct effect on its targeting to lysosomes or transporter activity.

It is found in the lysosome membrane. It catalyses the reaction L-alpha-aminoacyl-L-arginine(out) = L-alpha-aminoacyl-L-arginine(in). The enzyme catalyses L-arginyl-L-alpha-amino acid(out) = L-arginyl-L-alpha-amino acid(in). It carries out the reaction L-arginyl-glycine(out) = L-arginyl-glycine(in). The catalysed reaction is L-alpha-aminoacyl-L-lysine(out) = L-alpha-aminoacyl-L-lysine(in). It catalyses the reaction L-aspartyl-L-lysine(out) = L-aspartyl-L-lysine(in). The enzyme catalyses L-alanyl-L-lysine(out) = L-alanyl-L-lysine(in). It carries out the reaction L-lysyl-L-alpha-amino acid(out) = L-lysyl-L-alpha-amino acid(in). The catalysed reaction is L-lysyl-L-alanine(out) = L-lysyl-L-alanine(in). It catalyses the reaction L-lysyl-L-lysine(out) = L-lysyl-L-lysine(in). The enzyme catalyses L-lysyl-glycine(out) = L-lysyl-glycine(in). It carries out the reaction L-alpha-aminoacyl-L-histidine(out) = L-alpha-aminoacyl-L-histidine(in). The catalysed reaction is L-histidyl-L-alpha-amino acid(out) = L-histidyl-L-alpha-amino acid(in). It catalyses the reaction L-histidyl-glycine(out) = L-histidyl-glycine(in). In terms of biological role, lysosomal dipeptide uniporter that selectively exports lysine, arginine or histidine-containing dipeptides with a net positive charge from the lysosome lumen into the cytosol. Could play a role in a specific type of protein O-glycosylation indirectly regulating macrophages migration and tissue invasion. Also essential for liver homeostasis. This is Lysosomal dipeptide transporter MFSD1 from Bos taurus (Bovine).